The sequence spans 277 residues: 2-dehydro-3-deoxyphosphooctonate aldolase (277 aa).

It belongs to the KdsA family.

It is found in the cytoplasm. It catalyses the reaction D-arabinose 5-phosphate + phosphoenolpyruvate + H2O = 3-deoxy-alpha-D-manno-2-octulosonate-8-phosphate + phosphate. Its pathway is carbohydrate biosynthesis; 3-deoxy-D-manno-octulosonate biosynthesis; 3-deoxy-D-manno-octulosonate from D-ribulose 5-phosphate: step 2/3. It functions in the pathway bacterial outer membrane biogenesis; lipopolysaccharide biosynthesis. The polypeptide is 2-dehydro-3-deoxyphosphooctonate aldolase (Vesicomyosocius okutanii subsp. Calyptogena okutanii (strain HA)).